The following is a 198-amino-acid chain: Superoxide dismutase [Fe] (198 aa).

The Fe cation site is built by H27, H74, D158, and H162.

This sequence belongs to the iron/manganese superoxide dismutase family. As to quaternary structure, homodimer. Requires Fe cation as cofactor.

Its subcellular location is the cytoplasm. The enzyme catalyses 2 superoxide + 2 H(+) = H2O2 + O2. Its function is as follows. Destroys superoxide anion radicals which are normally produced within the cells and which are toxic to biological systems. The sequence is that of Superoxide dismutase [Fe] (SODB) from Plasmodium falciparum (isolate HB3).